The chain runs to 369 residues: Cytokine receptor common subunit gamma (369 aa).

Residues 1–22 (MLKPSLPFTSLLFLQLPLLGVG) form the signal peptide. The Extracellular portion of the chain corresponds to 23–262 (LNTTILTPNG…ENPFLFALEA (240 aa)). Residues Asn-24, Asn-71, Asn-75, and Asn-84 are each glycosylated (N-linked (GlcNAc...) asparagine). Residues Cys-62 and Cys-72 are joined by a disulfide bond. Cys-102 and Cys-115 are disulfide-bonded. The 98-residue stretch at 156–253 (APENLTLHKL…IHWGSNTSKE (98 aa)) folds into the Fibronectin type-III domain. Asn-159 carries N-linked (GlcNAc...) asparagine glycosylation. Cys-182 and Cys-231 form a disulfide bridge. The short motif at 237–241 (WSEWS) is the WSXWS motif element. Asn-249 is a glycosylation site (N-linked (GlcNAc...) asparagine). A helical membrane pass occupies residues 263–283 (VVISVGSMGLIISLLCVYFWL). Topologically, residues 284–369 (ERTMPRIPTL…PPCYTLKPET (86 aa)) are cytoplasmic. The Box 1 motif motif lies at 286–294 (TMPRIPTLK). Thr-292 bears the Phosphothreonine mark.

It belongs to the type I cytokine receptor family. Type 5 subfamily. As to quaternary structure, the gamma subunit is common to the IL2, IL4, IL7, IL15, IL21 and probably also the IL13 receptors. Interacts with SHB upon interleukin stimulation. Interacts with IL9. In terms of assembly, (Microbial infection) Interacts with HTLV-1 accessory protein p12I.

The protein localises to the cell membrane. The protein resides in the cell surface. Functionally, common subunit for the receptors for a variety of interleukins. Probably in association with IL15RA, involved in the stimulation of neutrophil phagocytosis by IL15. The polypeptide is Cytokine receptor common subunit gamma (IL2RG) (Homo sapiens (Human)).